A 116-amino-acid polypeptide reads, in one-letter code: Putative BPES syndrome breakpoint region protein (116 aa).

In terms of tissue distribution, seems to be expressed only in testis.

In Homo sapiens (Human), this protein is Putative BPES syndrome breakpoint region protein (BPESC1).